A 411-amino-acid chain; its full sequence is Adenylosuccinate synthetase (411 aa).

Residues 11-17 (GDEGKGK) and 39-41 (GHT) each bind GTP. The active-site Proton acceptor is Asp-12. The Mg(2+) site is built by Asp-12 and Gly-39. IMP is bound by residues 12-15 (DEGK), 37-40 (NAGH), Thr-121, Arg-135, Gln-215, Thr-230, and Arg-294. The active-site Proton donor is the His-40. 290–296 (TTTKRPR) contributes to the substrate binding site. Residues Arg-296, 322-324 (KLD), and 400-402 (STS) contribute to the GTP site.

It belongs to the adenylosuccinate synthetase family. In terms of assembly, homodimer. The cofactor is Mg(2+).

The protein resides in the cytoplasm. It catalyses the reaction IMP + L-aspartate + GTP = N(6)-(1,2-dicarboxyethyl)-AMP + GDP + phosphate + 2 H(+). It participates in purine metabolism; AMP biosynthesis via de novo pathway; AMP from IMP: step 1/2. Functionally, plays an important role in the de novo pathway of purine nucleotide biosynthesis. Catalyzes the first committed step in the biosynthesis of AMP from IMP. This is Adenylosuccinate synthetase from Helicobacter pylori (strain G27).